The primary structure comprises 269 residues: Eukaryotic translation initiation factor 3 subunit G-1 (269 aa).

The RRM domain maps to 188–266 (AAIRISNLSE…LILSVEWSKP (79 aa)). Ser-198 carries the phosphoserine modification.

The protein belongs to the eIF-3 subunit G family. In terms of assembly, component of the eukaryotic translation initiation factor 3 (eIF-3) complex. The eIF-3 complex interacts with pix.

The protein resides in the cytoplasm. In terms of biological role, RNA-binding component of the eukaryotic translation initiation factor 3 (eIF-3) complex, which is involved in protein synthesis of a specialized repertoire of mRNAs and, together with other initiation factors, stimulates binding of mRNA and methionyl-tRNAi to the 40S ribosome. The eIF-3 complex specifically targets and initiates translation of a subset of mRNAs involved in cell proliferation. This subunit can bind 18S rRNA. This chain is Eukaryotic translation initiation factor 3 subunit G-1, found in Drosophila melanogaster (Fruit fly).